Here is an 82-residue protein sequence, read N- to C-terminus: Sulfur carrier protein TusA (82 aa).

Cys19 (cysteine persulfide intermediate) is an active-site residue.

This sequence belongs to the sulfur carrier protein TusA family.

It is found in the cytoplasm. Sulfur carrier protein which probably makes part of a sulfur-relay system. The protein is Sulfur carrier protein TusA of Vibrio cholerae serotype O1 (strain ATCC 39541 / Classical Ogawa 395 / O395).